Consider the following 720-residue polypeptide: DNA replication licensing factor mcm7-B (720 aa).

The C4-type zinc-finger motif lies at 183 to 210 (CDQCGAETYQPIQSPTFMPLIMCPSREC). Positions 331 to 537 (FYEKLAASIA…NDLRLAQHIT (207 aa)) constitute an MCM domain. ATP is bound by residues Tyr344, Gly383, Ala385, Lys386, Ser387, Asn488, Arg513, and Arg603. The Arginine finger motif lies at 512–515 (SRFD).

This sequence belongs to the MCM family. Component of the mcm2-7 complex (RLF-M). The complex forms a toroidal hexameric ring with the proposed subunit order mcm2-mcm6-mcm4-mcm7-mcm3-mcm5. The heterodimer of mmcm3/mcm5 interacts with mcm4, mmcm6, mcm7 and weakly with mcm2. The N-terminus is required for interaction with mmcm3, though this interaction may not be direct, and remains in a complex with mmcm3 throughout the cell cycle. Begins to associate with zmcm6 at the neurula stage. Component of the replisome complex. Component of the CMG helicase complex, composed of the mcm2-7 complex, the GINS complex and cdc45. Ubiquitinated by traip when forks converge following formation of DNA interstrand cross-links. Short ubiquitin chains on mcm7 promote recruitment of DNA glycosylase neil3. If the interstrand cross-link cannot be cleaved by neil3, the ubiquitin chains continue to grow on mcm7, promoting the unloading of the CMG helicase complex by the vcp/p97 ATPase.

Its subcellular location is the nucleus. The protein localises to the chromosome. It carries out the reaction ATP + H2O = ADP + phosphate + H(+). Functionally, acts as a component of the mcm2-7 complex (mcm complex) which is the putative replicative helicase essential for 'once per cell cycle' DNA replication initiation and elongation in eukaryotic cells. The active ATPase sites in the mcm2-7 ring are formed through the interaction surfaces of two neighboring subunits such that a critical structure of a conserved arginine finger motif is provided in trans relative to the ATP-binding site of the Walker A box of the adjacent subunit. The six ATPase active sites, however, are likely to contribute differentially to the complex helicase activity. The existence of maternal and zygotic forms of mcm3 and mcm6 suggests that specific forms of mcm2-7 complexes may be used during different stages of development. This is DNA replication licensing factor mcm7-B (mcm7-b) from Xenopus laevis (African clawed frog).